Reading from the N-terminus, the 331-residue chain is Elongation factor Ts, mitochondrial (331 aa).

Residues 1–14 (MIVSRQVIRSVVRK) constitute a mitochondrion transit peptide.

It belongs to the EF-Ts family.

Its subcellular location is the mitochondrion. In terms of biological role, associates with the EF-Tu.GDP complex and induces the exchange of GDP to GTP. It remains bound to the aminoacyl-tRNA.EF-Tu.GTP complex up to the GTP hydrolysis stage on the ribosome. This is Elongation factor Ts, mitochondrial from Brugia malayi (Filarial nematode worm).